A 1531-amino-acid chain; its full sequence is Multidrug resistance-associated protein 1 (1531 aa).

Residues 1–33 are Extracellular-facing; that stretch reads MALRGFCSADGSDPLWDWNVTWYTSNPDFTKCF. Asn19 carries an N-linked (GlcNAc...) asparagine glycan. The helical transmembrane segment at 34–54 threads the bilayer; the sequence is QNTVLVWVPCFYLWACFPFYF. Topologically, residues 55–74 are cytoplasmic; the sequence is LYLSRHDRGYIQMTLLNKTK. Residues 75–95 form a helical membrane-spanning segment; sequence TALGFLLWIVCWADLFYSFWE. The Extracellular segment spans residues 96–100; it reads RSRGI. The chain crosses the membrane as a helical span at residues 101–121; it reads FLAPVFLVSPTLLGITMLLAT. At 122-133 the chain is on the cytoplasmic side; that stretch reads FLIQLERRKGVQ. The chain crosses the membrane as a helical span at residues 134 to 154; that stretch reads SSGIMLTFWLVALLCALAILR. Residues 155-172 are Extracellular-facing; that stretch reads SKIMTALKEDVQVDLFRD. Residues 173-193 traverse the membrane as a helical segment; sequence MTFYVYFSLVLIQLVLSCFSD. The Cytoplasmic portion of the chain corresponds to 194-316; it reads RSPLFSETIH…KEWNPSLFKV (123 aa). Tyr277 is subject to Phosphotyrosine. Ser289 is modified (phosphoserine). A helical transmembrane segment spans residues 317 to 337; sequence LYKTFGPYFLMSFFFKAIHDL. One can recognise an ABC transmembrane type-1 1 domain in the interval 325-608; it reads FLMSFFFKAI…LPMVISSIVQ (284 aa). The Extracellular portion of the chain corresponds to 338–363; that stretch reads MMFSGPEILKLLINFVNDTKAPDWQG. A helical transmembrane segment spans residues 364–384; that stretch reads YFYTALLFVAACLQTLVLHQY. Over 385–440 the chain is Cytoplasmic; that stretch reads FHICFVSGMRIKTAVIGAVYRKALVITNAARKSSTVGEIVNLMSVDAQRFMDLATY. The chain crosses the membrane as a helical span at residues 441-461; the sequence is INMIWSAPLQVILALYLLWRN. The Extracellular segment spans residues 462-464; the sequence is LGP. A helical membrane pass occupies residues 465–485; the sequence is PILAGVAVMVLMVPVNAVMAM. Residues 486–547 are Cytoplasmic-facing; it reads KTKTYQVAHM…VLKKSAYLAA (62 aa). Lys503 bears the N6-succinyllysine mark. The chain crosses the membrane as a helical span at residues 548-568; that stretch reads VGTFTWVCTPFLVALCTFAVY. Residues 569–590 lie on the Extracellular side of the membrane; the sequence is VTIDKNNVLDAQKAFVSLALFN. The helical transmembrane segment at 591–611 threads the bilayer; sequence ILRFPLNILPMVISSIVQASV. Topologically, residues 612 to 967 are cytoplasmic; it reads SLKRLRIFLS…VKLSVYWDYM (356 aa). The ABC transporter 1 domain maps to 644–868; the sequence is ITVRNATFTW…DGAFAEFLRT (225 aa). 678–685 provides a ligand contact to ATP; the sequence is GQVGCGKS. A disordered region spans residues 871-893; it reads SAEQEQDPEDNGVTGVSGPGKEA. Ser905, Ser915, and Ser930 each carry phosphoserine. Residues 917–938 are disordered; the sequence is SSSYSGDVSRQHNSTAELQKDG. Residues 922-933 show a composition bias toward polar residues; the sequence is GDVSRQHNSTAE. A helical membrane pass occupies residues 968 to 988; that stretch reads KAIGLFISFLSIFLFICNHVA. Residues 975-1256 enclose the ABC transmembrane type-1 2 domain; it reads SFLSIFLFIC…LVRMSSEMET (282 aa). Residues 989–1025 lie on the Extracellular side of the membrane; it reads ALASNYWLSLWTDDPIVNGTQEHTKVRLSVYGALGIS. Asn1006 carries N-linked (GlcNAc...) asparagine glycosylation. A helical transmembrane segment spans residues 1026 to 1046; sequence QGIAVFGYSMAVSIGGILASR. The Cytoplasmic segment spans residues 1047 to 1089; sequence CLHVDLLHSILRSPMSFFERTPSGNLVNRFSKELDTVDSMIPE. Residues 1090–1110 form a helical membrane-spanning segment; sequence VIKMFMGSLFNVIGACIVILL. Residue Ala1111 is a topological domain, extracellular. A helical transmembrane segment spans residues 1112 to 1132; that stretch reads TPIAAIIIPPLGLIYFFVQRF. Over 1133 to 1203 the chain is Cytoplasmic; sequence YVASSRQLKR…VANRWLAVRL (71 aa). A helical membrane pass occupies residues 1204–1224; sequence ECVGNCIVLFAALFAVISRHS. The Extracellular segment spans residues 1225–1226; sequence LS. The chain crosses the membrane as a helical span at residues 1227 to 1247; that stretch reads AGLVGLSVSYSLQVTTYLNWL. Topologically, residues 1248–1531 are cytoplasmic; the sequence is VRMSSEMETN…YNMARDAGLV (284 aa). Residues 1293 to 1527 enclose the ABC transporter 2 domain; it reads VEFRNYCLRY…RGLFYNMARD (235 aa). 1327–1334 contacts ATP; sequence GRTGAGKS.

This sequence belongs to the ABC transporter superfamily. ABCC family. Conjugate transporter (TC 3.A.1.208) subfamily.

The protein localises to the cell membrane. Its subcellular location is the basolateral cell membrane. It catalyses the reaction ATP + H2O + xenobioticSide 1 = ADP + phosphate + xenobioticSide 2.. The enzyme catalyses an S-substituted glutathione(in) + ATP + H2O = an S-substituted glutathione(out) + ADP + phosphate + H(+). The catalysed reaction is sphing-4-enine 1-phosphate(in) + ATP + H2O = sphing-4-enine 1-phosphate(out) + ADP + phosphate + H(+). It carries out the reaction leukotriene C4(in) + ATP + H2O = leukotriene C4(out) + ADP + phosphate + H(+). It catalyses the reaction 17beta-estradiol 17-O-(beta-D-glucuronate)(in) + ATP + H2O = 17beta-estradiol 17-O-(beta-D-glucuronate)(out) + ADP + phosphate + H(+). The enzyme catalyses daunorubicin(in) + ATP + H2O = daunorubicin(out) + ADP + phosphate + H(+). The catalysed reaction is vincristine(in) + ATP + H2O = vincristine(out) + ADP + phosphate + H(+). It carries out the reaction 2',3'-cGAMP(in) + ATP + H2O = 2',3'-cGAMP(out) + ADP + phosphate + H(+). It catalyses the reaction S-[(2E,6E,10E)-geranylgeranyl]-L-glutathione(in) + ATP + H2O = S-[(2E,6E,10E)-geranylgeranyl]-L-glutathione(out) + ADP + phosphate + H(+). The enzyme catalyses prostaglandin A2-S-(R)-glutathione(in) + ATP + H2O = prostaglandin A2-S-(R)-glutathione(out) + ADP + phosphate + H(+). The catalysed reaction is prostaglandin A2-S-(S)-glutathione(in) + ATP + H2O = prostaglandin A2-S-(S)-glutathione(out) + ADP + phosphate + H(+). MK 571 inhibits sphingosine 1-phosphate and leukotriene C4 export. Functionally, mediates export of organic anions and drugs from the cytoplasm. Mediates ATP-dependent transport of glutathione and glutathione conjugates, leukotriene C4, estradiol-17-beta-o-glucuronide, methotrexate, antiviral drugs and other xenobiotics. Confers resistance to anticancer drugs by decreasing accumulation of drug in cells, and by mediating ATP- and GSH-dependent drug export. Hydrolyzes ATP with low efficiency. Catalyzes the export of sphingosine 1-phosphate from mast cells independently of their degranulation. Participates in inflammatory response by allowing export of leukotriene C4 from leukotriene C4-synthesizing cells. Mediates ATP-dependent, GSH-independent cyclic GMP-AMP (cGAMP) export. Thus, by limiting intracellular cGAMP concentrations negatively regulates the cGAS-STING pathway. Exports S-geranylgeranyl-glutathione (GGG) in lymphoid cells and stromal compartments of lymphoid organs. ABCC1 (via extracellular transport) with GGT5 (via GGG catabolism) establish GGG gradients within lymphoid tissues to position P2RY8-positive lymphocytes at germinal centers in lymphoid follicles and restrict their chemotactic transmigration from blood vessels to the bone marrow parenchyma. Mediates basolateral export of GSH-conjugated R- and S-prostaglandin A2 diastereomers in polarized epithelial cells. The protein is Multidrug resistance-associated protein 1 of Macaca fascicularis (Crab-eating macaque).